The chain runs to 344 residues: Glyceraldehyde-3-phosphate dehydrogenase (344 aa).

NAD(+)-binding positions include threonine 11 to isoleucine 12 and glycine 110. D-glyceraldehyde 3-phosphate is bound at residue serine 139–asparagine 141. Cysteine 140 acts as the Nucleophile in catalysis. Residue arginine 169 coordinates NAD(+). Histidine 195–glycine 196 is a binding site for D-glyceraldehyde 3-phosphate. Glutamine 302 lines the NAD(+) pocket.

Belongs to the glyceraldehyde-3-phosphate dehydrogenase family. Homotetramer.

It localises to the cytoplasm. It carries out the reaction D-glyceraldehyde 3-phosphate + phosphate + NADP(+) = (2R)-3-phospho-glyceroyl phosphate + NADPH + H(+). The catalysed reaction is D-glyceraldehyde 3-phosphate + phosphate + NAD(+) = (2R)-3-phospho-glyceroyl phosphate + NADH + H(+). Its pathway is carbohydrate degradation; glycolysis; pyruvate from D-glyceraldehyde 3-phosphate: step 1/5. This chain is Glyceraldehyde-3-phosphate dehydrogenase, found in Pyrobaculum calidifontis (strain DSM 21063 / JCM 11548 / VA1).